A 275-amino-acid polypeptide reads, in one-letter code: Trypsin-3 (275 aa).

The first 22 residues, 1-22 (MISNKIAILLAVLVVAVACAQA), serve as a signal peptide directing secretion. Positions 23 to 48 (RVALKHRSVQALPRFLPRPKYDVGHR) are cleaved as a propeptide — activation peptide. Positions 49–274 (IVGGFEIDVS…VRDWVRENSG (226 aa)) constitute a Peptidase S1 domain. A disulfide bridge links C74 with C90. Catalysis depends on charge relay system residues H89 and D134. Cystine bridges form between C199–C215 and C226–C250. S230 serves as the catalytic Charge relay system.

Belongs to the peptidase S1 family. In terms of tissue distribution, expressed in the midgut. Expression levels drop a few hours after blood feeding and pick up again 28 hours later.

Its subcellular location is the secreted. The catalysed reaction is Preferential cleavage: Arg-|-Xaa, Lys-|-Xaa.. Its function is as follows. Constitutive trypsin that is expressed 2 days after emergence, coinciding with host seeking behavior of the female. This chain is Trypsin-3 (TRYP3), found in Anopheles gambiae (African malaria mosquito).